The sequence spans 290 residues: Bifunctional protein FolD (290 aa).

NADP(+) is bound by residues 169–171 (GAS), isoleucine 194, and isoleucine 235.

Belongs to the tetrahydrofolate dehydrogenase/cyclohydrolase family. Homodimer.

The enzyme catalyses (6R)-5,10-methylene-5,6,7,8-tetrahydrofolate + NADP(+) = (6R)-5,10-methenyltetrahydrofolate + NADPH. It catalyses the reaction (6R)-5,10-methenyltetrahydrofolate + H2O = (6R)-10-formyltetrahydrofolate + H(+). The protein operates within one-carbon metabolism; tetrahydrofolate interconversion. In terms of biological role, catalyzes the oxidation of 5,10-methylenetetrahydrofolate to 5,10-methenyltetrahydrofolate and then the hydrolysis of 5,10-methenyltetrahydrofolate to 10-formyltetrahydrofolate. The polypeptide is Bifunctional protein FolD (Helicobacter pylori (strain J99 / ATCC 700824) (Campylobacter pylori J99)).